Consider the following 561-residue polypeptide: Arginine--tRNA ligase (561 aa).

The short motif at 129–139 (ANPTGPLHIGH) is the 'HIGH' region element.

This sequence belongs to the class-I aminoacyl-tRNA synthetase family. In terms of assembly, monomer.

Its subcellular location is the cytoplasm. The enzyme catalyses tRNA(Arg) + L-arginine + ATP = L-arginyl-tRNA(Arg) + AMP + diphosphate. The polypeptide is Arginine--tRNA ligase (Geotalea daltonii (strain DSM 22248 / JCM 15807 / FRC-32) (Geobacter daltonii)).